The sequence spans 292 residues: Putative two-component response regulator-like APRR4 (292 aa).

Residues 43–158 (RVLVFDEDPS…DLRIVFKHLV (116 aa)) form the Response regulatory domain. Residues 168–215 (VTGEAEKAAGEKSSSVGDSTIRNPNKSKRSSCLEAEVNEEDRHDHNDR) are disordered. Residues 179 to 191 (KSSSVGDSTIRNP) are compositionally biased toward polar residues. Positions 225–275 (RVVWDEELHQNFLNAVDFLGLERAVPKKILDVMKVDYISRENVASHLQVTF) form a DNA-binding region, myb-like GARP.

This sequence belongs to the ARR-like family. Binds the target DNA as a monomer.

The protein resides in the nucleus. Its function is as follows. Transcriptional activator that binds specifically to the DNA sequence 5'-[AG]GATT-3'. In Arabidopsis thaliana (Mouse-ear cress), this protein is Putative two-component response regulator-like APRR4 (APRR4).